We begin with the raw amino-acid sequence, 526 residues long: Acetyl-CoA hydrolase (526 aa).

Position 277-281 (277-281 (GIGNI)) interacts with CoA. E302 functions as the 5-glutamyl coenzyme A thioester intermediate in the catalytic mechanism. 2 residues coordinate CoA: N392 and G396.

It belongs to the acetyl-CoA hydrolase/transferase family.

It localises to the cytoplasm. It carries out the reaction acetyl-CoA + H2O = acetate + CoA + H(+). Its function is as follows. Presumably involved in regulating the intracellular acetyl-CoA pool for fatty acid and cholesterol synthesis and fatty acid oxidation. The protein is Acetyl-CoA hydrolase (ACH1) of Candida glabrata (strain ATCC 2001 / BCRC 20586 / JCM 3761 / NBRC 0622 / NRRL Y-65 / CBS 138) (Yeast).